We begin with the raw amino-acid sequence, 215 residues long: Rac-like GTP-binding protein ARAC10 (215 aa).

Residue 15–22 (GDGAVGKT) participates in GTP binding. An Effector region motif is present at residues 37–45 (YIPTVFDNF). Residues 62–66 (DTAGQ) and 120–123 (TKLD) contribute to the GTP site. S-palmitoyl cysteine attachment occurs at residues C202 and C208.

It belongs to the small GTPase superfamily. Rho family. In terms of assembly, component of the active ARAC10-IRC5-KIN13A complex. Interacts with ICR5.

It localises to the membrane. It is found in the cytoplasm. Its subcellular location is the cytoskeleton. Involved in local disassembly of cortical microtubules when associated with ICR5 and KIN13A. In Arabidopsis thaliana (Mouse-ear cress), this protein is Rac-like GTP-binding protein ARAC10 (ARAC10).